The sequence spans 291 residues: Ribosomal large subunit pseudouridine synthase B (291 aa).

Residues 3-75 (EKLQKVLARA…ICRVLAYYKP (73 aa)) enclose the S4 RNA-binding domain. The Nucleophile role is filled by Asp110. A disordered region spans residues 256–291 (VEKDRRRMKANQIRRAVKRHSQVSGGRRSGGRNNNG).

This sequence belongs to the pseudouridine synthase RsuA family.

It carries out the reaction uridine(2605) in 23S rRNA = pseudouridine(2605) in 23S rRNA. Functionally, responsible for synthesis of pseudouridine from uracil-2605 in 23S ribosomal RNA. The chain is Ribosomal large subunit pseudouridine synthase B (rluB) from Escherichia coli (strain K12).